Here is a 277-residue protein sequence, read N- to C-terminus: Large ribosomal subunit protein uL2 (277 aa).

Residues 222–258 form a disordered region; it reads GSVMNPCDHPHGGGEGRSPIGRPSPVTPWGKPALGYK.

Belongs to the universal ribosomal protein uL2 family. Part of the 50S ribosomal subunit. Forms a bridge to the 30S subunit in the 70S ribosome.

Its function is as follows. One of the primary rRNA binding proteins. Required for association of the 30S and 50S subunits to form the 70S ribosome, for tRNA binding and peptide bond formation. It has been suggested to have peptidyltransferase activity; this is somewhat controversial. Makes several contacts with the 16S rRNA in the 70S ribosome. The polypeptide is Large ribosomal subunit protein uL2 (Clostridium perfringens (strain 13 / Type A)).